The primary structure comprises 278 residues: Octanoyl-[GcvH]:protein N-octanoyltransferase (278 aa).

The BPL/LPL catalytic domain occupies 41-247 (LVSPPTIRTW…LLHRLAGEVH (207 aa)). Cys-146 acts as the Acyl-thioester intermediate in catalysis.

It belongs to the octanoyltransferase LipL family.

It carries out the reaction N(6)-octanoyl-L-lysyl-[glycine-cleavage complex H protein] + L-lysyl-[lipoyl-carrier protein] = N(6)-octanoyl-L-lysyl-[lipoyl-carrier protein] + L-lysyl-[glycine-cleavage complex H protein]. The protein operates within protein modification; protein lipoylation via endogenous pathway; protein N(6)-(lipoyl)lysine from octanoyl-[acyl-carrier-protein]. In terms of biological role, catalyzes the amidotransfer (transamidation) of the octanoyl moiety from octanoyl-GcvH to the lipoyl domain of the E2 subunit of lipoate-dependent enzymes. In Lysinibacillus sphaericus (strain C3-41), this protein is Octanoyl-[GcvH]:protein N-octanoyltransferase.